A 336-amino-acid chain; its full sequence is Immune-associated nucleotide-binding protein 6 (336 aa).

An AIG1-type G domain is found at 33–241 (EPVKNVVLVG…FTDTMHRRIQ (209 aa)). The G1 stretch occupies residues 42–49 (GRTGNGKS). Residues 42-50 (GRTGNGKSA) and Ser63 each bind GTP. Positions 69–73 (GVTTR) are G2. The segment at 91 to 94 (DTPG) is G3. The segment at 161–164 (TCGD) is G4. Residues 200–202 (DNR) form a G5 region. Asn201 serves as a coordination point for GTP. Residues 237–270 (HRRIQEEAARVKREEKEIEEKNIADEEKAALKKQ) adopt a coiled-coil conformation.

Belongs to the TRAFAC class TrmE-Era-EngA-EngB-Septin-like GTPase superfamily. AIG1/Toc34/Toc159-like paraseptin GTPase family. IAN subfamily. Mostly expressed in pollen. Also detected in lateral roots and radicles.

The polypeptide is Immune-associated nucleotide-binding protein 6 (Arabidopsis thaliana (Mouse-ear cress)).